The primary structure comprises 158 residues: uncharacterized protein (158 aa).

Residues 1–18 (MDLASEITSATQTSSLCS) show a composition bias toward polar residues. 3 disordered regions span residues 1 to 20 (MDLA…CSSG), 66 to 94 (LRDL…KPCL), and 111 to 158 (GSSG…GEEF). The span at 72-90 (RGSTSSSRSPSRPVSTSAS) shows a compositional bias: low complexity. Polar residues-rich tracts occupy residues 111–120 (GSSGHLQSPG) and 149–158 (LSHSAQGEEF).

This is an uncharacterized protein from Homo sapiens (Human).